A 977-amino-acid polypeptide reads, in one-letter code: P3N-PIPO polyprotein (977 aa).

The Peptidase S30 domain occupies 132 to 274 (TCSSSGLDNL…QSITLRATHF (143 aa)). Catalysis depends on for P1 proteinase activity residues H183, D192, and S225. The Involved in interaction with stylet and aphid transmission motif lies at 325–328 (KITC). Residues 583–585 (PTK) carry the Involved in virions binding and aphid transmission motif. The Peptidase C6 domain maps to 609–731 (MYIAKEGYCY…ESPMAQYKVG (123 aa)). Residues C617 and H690 each act as for helper component proteinase activity in the active site.

This sequence belongs to the potyviridae P3N-PIPO polyprotein family. Interacts (via PIPO domain) with host PCaP1 protein; this interaction may help to anchor the movement complex to the plasma membrane from which the complex could move to the plasmodesmata. Potyviral RNA is expressed as two polyproteins which undergo post-translational proteolytic processing. Genome polyprotein is processed by NIa-pro, P1 and HC-pro proteinases resulting in the production of at least ten individual proteins. P3N-PIPO is cleaved by P1 and HC-pro proteinases resulting in the production of three individual proteins. The P1 proteinase and the HC-pro cleave only their respective C-termini autocatalytically.

It localises to the host cell junction. The protein resides in the host plasmodesma. The enzyme catalyses Hydrolyzes a Gly-|-Gly bond at its own C-terminus, commonly in the sequence -Tyr-Xaa-Val-Gly-|-Gly, in the processing of the potyviral polyprotein.. In terms of biological role, required for aphid transmission and also has proteolytic activity. Only cleaves a Gly-Gly dipeptide at its own C-terminus. Interacts with virions and aphid stylets. Acts as a suppressor of RNA-mediated gene silencing, also known as post-transcriptional gene silencing (PTGS), a mechanism of plant viral defense that limits the accumulation of viral RNAs. May have RNA-binding activity. Functionally, allows efficient cell to cell propagation, by bypassing the host cell wall barrier. Transports viral genome to neighboring plant cells directly through plasmosdesmata, without any budding. The chain is P3N-PIPO polyprotein from Nicotiana tabacum (Common tobacco).